A 141-amino-acid polypeptide reads, in one-letter code: Hemoglobin subunit alpha-A (141 aa).

The Globin domain occupies 1–141 (VLSAADKTNV…VSTVLTAKYR (141 aa)). H58 provides a ligand contact to O2. H87 provides a ligand contact to heme b.

This sequence belongs to the globin family. Heterotetramer of two alpha chains and two beta chains. Red blood cells.

Involved in oxygen transport from the lung to the various peripheral tissues. In Eudynamys scolopaceus (Western koel), this protein is Hemoglobin subunit alpha-A (HBAA).